A 295-amino-acid polypeptide reads, in one-letter code: MKAYLVGLYTLTPTHPGSGTELGVVDQPIQRERHTGFPVIWGQSLKGVLRSYLKLVEKVDEEKINKIFGPPTEKAHEQAGLISVGDAKILFFPVRSLKGVYAYVTSPLVLNRFKRDLELAGVKNFQTEIPELTDTAIASEEITVDNKVILEEFAILIQKDDKGILESVVKAIEQAFGNEMAEKIKGRIAIIPDDVFRDLVELSTEIVARIRINAETGTVETGGLWYEEYIPSDTLFYSLILVTPRAKDNDMALIKEVLGKINGKYLQIGGNETVGKGFVKVTLKEVTNNGGTHAK.

Belongs to the CRISPR system Cmr4 family. In terms of assembly, forms oligomers in isolation. Part of the type III-B Cmr ribonucleoprotein (RNP) complex, an elongated RNP with Cmr2 and Cmr3 as the base, with Cmr4 and Cmr5 forming a helical core along the mature crRNA (39 or 45 nt in length), while the complex is capped by Cmr6 and Cmr1. The 5' end of the crRNA is bound to Cmr2 and Cmr3, while Cmr6 and a Cmr1 subunit (Cmr1-1 or Cmr1-2) cap the 3' end of the crRNA. The target RNA lies anti-parallel to the crRNA, with its 5' end near Cmr1 and Cmr6 and its 3' end near Cmr2 and Cmr3; major target RNA cleavage occurs nears the junction of Cmr1/Cmr6 and Cmr4/Cmr5, with minor cleavage occurring at 6 nt intervals which coincide with the proposed spacing of Cmr4 subunits. Interacts with Cmr5. Interacts with Cmr2, Cmr3, Cmr5 and Cmr6.

It localises to the cytoplasm. CRISPR (clustered regularly interspaced short palindromic repeat), is an adaptive immune system that provides protection against mobile genetic elements (viruses, transposable elements and conjugative plasmids). CRISPR clusters contain sequences complementary to antecedent mobile elements and target invading nucleic acids. CRISPR clusters are transcribed and processed into CRISPR RNA (crRNA), formerly called psiRNA (prokaryotic silencing) in this organism. Part of the Cmr ribonucleoprotein complex which has divalent cation-dependent endoribonuclease activity specific for ssRNA complementary to the crRNA (target RNA), generating 5' hydroxy- and 3' phosphate or 2'-3' cyclic phosphate termini. This is probably the subunit that cleaves the target RNA. Cmr complex does not cleave ssDNA complementary to the crRNA. Cleavage of target RNA is guided by the crRNA; substrate cleavage occurs a fixed distance (14 nt) from the 3' end of the crRNA. In vitro reconstitution shows Cmr1-2 and Cmr5 are not absolutely necessary for target cleavage. In Pyrococcus furiosus (strain ATCC 43587 / DSM 3638 / JCM 8422 / Vc1), this protein is CRISPR system Cmr endoribonuclease Cmr4.